The following is a 468-amino-acid chain: 3-isopropylmalate dehydratase large subunit (468 aa).

[4Fe-4S] cluster-binding residues include Cys347, Cys407, and Cys410.

It belongs to the aconitase/IPM isomerase family. LeuC type 1 subfamily. Heterodimer of LeuC and LeuD. [4Fe-4S] cluster serves as cofactor.

The catalysed reaction is (2R,3S)-3-isopropylmalate = (2S)-2-isopropylmalate. It participates in amino-acid biosynthesis; L-leucine biosynthesis; L-leucine from 3-methyl-2-oxobutanoate: step 2/4. In terms of biological role, catalyzes the isomerization between 2-isopropylmalate and 3-isopropylmalate, via the formation of 2-isopropylmaleate. The sequence is that of 3-isopropylmalate dehydratase large subunit from Glaesserella parasuis serovar 5 (strain SH0165) (Haemophilus parasuis).